The following is a 444-amino-acid chain: Cell division cycle 20.4, cofactor of APC complex (444 aa).

Over residues leucine 88–glutamine 99 the composition is skewed to polar residues. Residues leucine 88–arginine 108 are disordered. 7 WD repeats span residues arginine 124–leucine 161, glutamate 166–threonine 205, glycine 209–glutamate 246, glycine 250–threonine 289, glutamate 298–serine 340, glutamate 342–glutamate 383, and glycine 386–threonine 425.

The protein belongs to the WD repeat CDC20/Fizzy family. The APC/C is composed of at least 11 subunits that stay tightly associated throughout the cell cycle.

The protein resides in the cytoplasm. It functions in the pathway protein modification; protein ubiquitination. In terms of biological role, component of the anaphase promoting complex/cyclosome (APC/C), a cell cycle-regulated E3 ubiquitin-protein ligase complex that controls progression through mitosis and the G1 phase of the cell cycle. This Arabidopsis thaliana (Mouse-ear cress) protein is Cell division cycle 20.4, cofactor of APC complex (CDC20-4).